The following is a 314-amino-acid chain: MMCLKLNLLDHVFANPFMNAAGVLCSTEEDLRCMTASSSGALVSKSCTSAPRDGNPEPRYMAFPLGSINSMGLPNLGFDFYLKYASDLHDYSKKPLFLSISGLSVEENVAMVRRLAPVAQEKGVLLELNLSCPNVPGKPQVAYDFEAMRTYLQQVSLAYGLPFGVKMPPYFDIAHFDTAAAVLNEFPLVKFVTCVNSVGNGLVIDAESESVVIKPKQGFGGLGGKYILPTALANVNAFYRRCPDKLVFGCGGVYSGEDAFLHILAGASMVQVGTALQEEGPGIFTRLEDELLEIMARKGYRTLEEFRGRVKTIE.

FMN is bound by residues Ala21 and 45 to 46 (KS). Substrate-binding positions include Lys45, 69-73 (NSMGL), and Asn129. Asn129 is a binding site for FMN. The active-site Nucleophile is the Cys132. Asn134 contacts substrate. Lys166 and Val195 together coordinate FMN. 196 to 197 (NS) contributes to the substrate binding site. FMN is bound by residues Gly224, 251-252 (GG), and 273-274 (GT).

It belongs to the dihydroorotate dehydrogenase family. Type 1 subfamily. As to quaternary structure, homodimer. The cofactor is FMN.

The protein resides in the cytoplasm. It catalyses the reaction (S)-dihydroorotate + fumarate = orotate + succinate. It functions in the pathway pyrimidine metabolism; UMP biosynthesis via de novo pathway. In terms of biological role, catalyzes the conversion of dihydroorotate to orotate with fumarate as the electron acceptor. Molecular oxygen can replace fumarate in vitro. The polypeptide is Dihydroorotate dehydrogenase (fumarate) (pyr4) (Trypanosoma cruzi (strain CL Brener)).